Consider the following 749-residue polypeptide: Homeobox-leucine zipper protein ROC7 (749 aa).

The disordered stretch occupies residues 26–98; the sequence is LDQHQQHQHQ…KKRYHRHTQH (73 aa). Basic and acidic residues predominate over residues 46 to 57; sequence SDGRAPRDELEM. Positions 68 to 78 are enriched in gly residues; that stretch reads SGGGGGGGGSG. The span at 86–97 shows a compositional bias: basic residues; sequence RPRKKRYHRHTQ. Positions 88–147 form a DNA-binding region, homeobox; sequence RKKRYHRHTQHQIQELEAFFKECPHPDDKQRKELSRELGLEPLQVKFWFQNKRTQMKTQH. A coiled-coil region spans residues 137–218; the sequence is QNKRTQMKTQ…DRISAIAAKY (82 aa). The START domain maps to 256-494; the sequence is ADFDKPLVIE…LERQCERLAS (239 aa).

It belongs to the HD-ZIP homeobox family. Class IV subfamily.

It is found in the nucleus. Its function is as follows. Probable transcription factor. The chain is Homeobox-leucine zipper protein ROC7 (ROC7) from Oryza sativa subsp. indica (Rice).